The sequence spans 314 residues: MTRLPILLLLISLVYATPFPQTSKKIGDDATLSCNRNNTNDYVVMSAWYKEPNSIILLAAKSDVLYFDNYTKDKISYDSPYDDLVTTITIKSLTARDAGTYVCAFFMTSTTNDTDKVDYEEYSTELIVNTDSESTIDIILSGSTHSPETSSKKPDYIDNSNCSSVFEIATPEPITDNVEDHTDTVTYTSDSINTVSASSGESTTDETPEPITDKEDHTVTDTVSYTTVSTSSGIVTTKSTTDDADLYDTYNDNDTVPPTTVGGSTTSISNYKTKDFVEIFGITALIILSAVAIFCITYYIYNKRSRKYKTENKV.

The N-terminal stretch at 1–16 is a signal peptide; that stretch reads MTRLPILLLLISLVYA. The Ig-like V-type domain maps to 17–121; sequence TPFPQTSKKI…NDTDKVDYEE (105 aa). At 17 to 278 the chain is on the virion surface side; it reads TPFPQTSKKI…SNYKTKDFVE (262 aa). Residues C34 and C103 are joined by a disulfide bond. 4 N-linked (GlcNAc...) asparagine; by host glycosylation sites follow: N37, N69, N112, and N161. Residues 193-202 are compositionally biased toward polar residues; the sequence is NTVSASSGES. The segment at 193-214 is disordered; the sequence is NTVSASSGESTTDETPEPITDK. The N-linked (GlcNAc...) asparagine; by host glycan is linked to N253. The helical transmembrane segment at 279–302 threads the bilayer; it reads IFGITALIILSAVAIFCITYYIYN. Over 303-314 the chain is Intravirion; that stretch reads KRSRKYKTENKV.

It belongs to the orthopoxvirus OPG185 family. As to quaternary structure, heterodimerizes with OPG040. The heterodimer OPG185-OPG040 interacts with components of the entry fusion complex OPG143 and OPG094. Heterodimer with C3/VPC protein; disulfide-linked. In terms of processing, glycosylated; contains phosphate and sulfate-substituted glycans. O-glycosylation is required for hemagglutination and hemadsorption activities of infected cell membranes.

The protein resides in the virion membrane. Its subcellular location is the host membrane. Prevents cell to cell fusion by interacting with and directing the viral OPG040 protein on the host plasma membrane. The OPG185-OPG040 complex associates with components of the entry fusion complex (EFC) presumably to avoid superinfection and syncytium formation. Via its interaction with C3/VCP protein, protects the infected cell and probably also the extracellular enveloped virus from complement attack. In Bos taurus (Bovine), this protein is Protein OPG185 (OPG185).